A 526-amino-acid chain; its full sequence is Cytochrome P450 52A5 (526 aa).

Residues W18–L38 traverse the membrane as a helical segment. C473 provides a ligand contact to heme.

The protein belongs to the cytochrome P450 family. Requires heme as cofactor.

Its subcellular location is the membrane. In terms of biological role, together with an NADPH cytochrome P450 the enzyme system catalyzes the terminal hydroxylation as the first step in the assimilation of alkanes and fatty acids. This is Cytochrome P450 52A5 (CYP52A5) from Candida maltosa (Yeast).